The sequence spans 161 residues: Nucleotide-binding protein Bmul_0741/BMULJ_02519 (161 aa).

The protein belongs to the YajQ family.

Nucleotide-binding protein. The chain is Nucleotide-binding protein Bmul_0741/BMULJ_02519 from Burkholderia multivorans (strain ATCC 17616 / 249).